The chain runs to 323 residues: Homoserine kinase (323 aa).

97–107 (PHGRGMGSSGA) serves as a coordination point for ATP.

This sequence belongs to the GHMP kinase family. Homoserine kinase subfamily.

The protein localises to the cytoplasm. The catalysed reaction is L-homoserine + ATP = O-phospho-L-homoserine + ADP + H(+). The protein operates within amino-acid biosynthesis; L-threonine biosynthesis; L-threonine from L-aspartate: step 4/5. Catalyzes the ATP-dependent phosphorylation of L-homoserine to L-homoserine phosphate. The chain is Homoserine kinase from Leifsonia xyli subsp. xyli (strain CTCB07).